Here is a 310-residue protein sequence, read N- to C-terminus: Ribosomal RNA small subunit methyltransferase H (310 aa).

S-adenosyl-L-methionine contacts are provided by residues 32-34, Asp52, Ala83, Asp100, and Gln107; that span reads GGH.

It belongs to the methyltransferase superfamily. RsmH family.

Its subcellular location is the cytoplasm. It catalyses the reaction cytidine(1402) in 16S rRNA + S-adenosyl-L-methionine = N(4)-methylcytidine(1402) in 16S rRNA + S-adenosyl-L-homocysteine + H(+). Functionally, specifically methylates the N4 position of cytidine in position 1402 (C1402) of 16S rRNA. This chain is Ribosomal RNA small subunit methyltransferase H, found in Geobacillus sp. (strain WCH70).